The primary structure comprises 431 residues: Enolase (431 aa).

(2R)-2-phosphoglycerate is bound at residue Gln167. The Proton donor role is filled by Glu209. Residues Asp246, Glu289, and Asp316 each coordinate Mg(2+). Residues Lys341, Arg370, Ser371, and Lys392 each coordinate (2R)-2-phosphoglycerate. Lys341 functions as the Proton acceptor in the catalytic mechanism.

This sequence belongs to the enolase family. As to quaternary structure, component of the RNA degradosome, a multiprotein complex involved in RNA processing and mRNA degradation. Requires Mg(2+) as cofactor.

The protein resides in the cytoplasm. The protein localises to the secreted. It is found in the cell surface. It carries out the reaction (2R)-2-phosphoglycerate = phosphoenolpyruvate + H2O. It functions in the pathway carbohydrate degradation; glycolysis; pyruvate from D-glyceraldehyde 3-phosphate: step 4/5. Catalyzes the reversible conversion of 2-phosphoglycerate (2-PG) into phosphoenolpyruvate (PEP). It is essential for the degradation of carbohydrates via glycolysis. The protein is Enolase of Shewanella denitrificans (strain OS217 / ATCC BAA-1090 / DSM 15013).